Consider the following 348-residue polypeptide: Fructose-1,6-bisphosphatase class 1 (348 aa).

Positions 92, 111, 113, and 114 each coordinate Mg(2+). Residues 114–117 (DGSS) and N204 contribute to the substrate site. E276 contacts Mg(2+).

Belongs to the FBPase class 1 family. As to quaternary structure, homotetramer. Mg(2+) serves as cofactor.

It localises to the cytoplasm. The catalysed reaction is beta-D-fructose 1,6-bisphosphate + H2O = beta-D-fructose 6-phosphate + phosphate. It functions in the pathway carbohydrate biosynthesis; gluconeogenesis. This chain is Fructose-1,6-bisphosphatase class 1, found in Methylorubrum extorquens (strain CM4 / NCIMB 13688) (Methylobacterium extorquens).